We begin with the raw amino-acid sequence, 295 residues long: ATP synthase gamma chain (295 aa).

This sequence belongs to the ATPase gamma chain family. As to quaternary structure, F-type ATPases have 2 components, CF(1) - the catalytic core - and CF(0) - the membrane proton channel. CF(1) has five subunits: alpha(3), beta(3), gamma(1), delta(1), epsilon(1). CF(0) has three main subunits: a, b and c.

Its subcellular location is the cell inner membrane. In terms of biological role, produces ATP from ADP in the presence of a proton gradient across the membrane. The gamma chain is believed to be important in regulating ATPase activity and the flow of protons through the CF(0) complex. The chain is ATP synthase gamma chain from Campylobacter curvus (strain 525.92).